The sequence spans 259 residues: Probable ABC transporter arginine-binding protein ArtJ (259 aa).

Residues M1–S25 form the signal peptide. 7 residues coordinate L-arginine: N38, E45, A96, G97, S99, R104, and F149.

It belongs to the bacterial solute-binding protein 3 family.

It is found in the secreted. The protein localises to the cell surface. Its function is as follows. Probably part of an ABC transporter complex involved in arginine transport. Binds arginine. Interacts with host epithelial cells, suggesting a role in host-cell adhesion during infection. The protein is Probable ABC transporter arginine-binding protein ArtJ of Chlamydia pneumoniae (Chlamydophila pneumoniae).